A 332-amino-acid polypeptide reads, in one-letter code: ATP-dependent 6-phosphofructokinase (332 aa).

Gly11 is a binding site for ATP. 21–25 (RSVVR) lines the ADP pocket. Residues 72 to 73 (RC) and 102 to 105 (GDGS) contribute to the ATP site. Asp103 contacts Mg(2+). A substrate-binding site is contributed by 126–128 (TID). Catalysis depends on Asp128, which acts as the Proton acceptor. ADP is bound at residue Arg155. Substrate-binding positions include Arg163 and 170 to 172 (MGR). ADP is bound by residues 186–188 (GAE), Arg212, and 214–216 (KLH). Substrate contacts are provided by residues Glu223, Arg256, and 262-265 (HIQR).

Belongs to the phosphofructokinase type A (PFKA) family. ATP-dependent PFK group I subfamily. Prokaryotic clade 'B1' sub-subfamily. In terms of assembly, homotetramer. Requires Mg(2+) as cofactor.

It is found in the cytoplasm. The catalysed reaction is beta-D-fructose 6-phosphate + ATP = beta-D-fructose 1,6-bisphosphate + ADP + H(+). It functions in the pathway carbohydrate degradation; glycolysis; D-glyceraldehyde 3-phosphate and glycerone phosphate from D-glucose: step 3/4. Its activity is regulated as follows. Allosterically activated by ADP and other diphosphonucleosides, and allosterically inhibited by phosphoenolpyruvate. Catalyzes the phosphorylation of D-fructose 6-phosphate to fructose 1,6-bisphosphate by ATP, the first committing step of glycolysis. The chain is ATP-dependent 6-phosphofructokinase from Halothermothrix orenii (strain H 168 / OCM 544 / DSM 9562).